Consider the following 100-residue polypeptide: MKKIVFLILGLAAFAFGADGEMIRSYSVIAGGIGLGLAALGGAIGMGNTAAATISGTARNPGVGSKLMTTMFIALAMIEAQVIYALVITLIVLYANPMLG.

The next 2 helical transmembrane spans lie at 27-47 and 72-92; these read SVIAGGIGLGLAALGGAIGMG and FIALAMIEAQVIYALVITLIV.

This sequence belongs to the ATPase C chain family. As to quaternary structure, F-type ATPases have 2 components, F(1) - the catalytic core - and F(0) - the membrane proton channel. F(1) has five subunits: alpha(3), beta(3), gamma(1), delta(1), epsilon(1). F(0) has three main subunits: a(1), b(2) and c(10-14). The alpha and beta chains form an alternating ring which encloses part of the gamma chain. F(1) is attached to F(0) by a central stalk formed by the gamma and epsilon chains, while a peripheral stalk is formed by the delta and b chains.

It is found in the cell inner membrane. Functionally, f(1)F(0) ATP synthase produces ATP from ADP in the presence of a proton or sodium gradient. F-type ATPases consist of two structural domains, F(1) containing the extramembraneous catalytic core and F(0) containing the membrane proton channel, linked together by a central stalk and a peripheral stalk. During catalysis, ATP synthesis in the catalytic domain of F(1) is coupled via a rotary mechanism of the central stalk subunits to proton translocation. In terms of biological role, key component of the F(0) channel; it plays a direct role in translocation across the membrane. A homomeric c-ring of between 10-14 subunits forms the central stalk rotor element with the F(1) delta and epsilon subunits. The sequence is that of ATP synthase subunit c from Campylobacter concisus (strain 13826).